We begin with the raw amino-acid sequence, 463 residues long: Retinoic acid receptor RXR-gamma (463 aa).

The interval 1–138 is modulating; it reads MYGNYSHFMK…TSPGSLVKHI (138 aa). The interval 16–53 is disordered; the sequence is GGSPGHTGSTSMSPSVALPTGKPMDSHPSYTDTPVSAP. NR C4-type zinc fingers lie at residues 139-159 and 175-199; these read CAIC…CEGC and CRDN…YQKC. Residues 139–204 constitute a DNA-binding region (nuclear receptor); sequence CAICGDRSSG…RYQKCLVMGM (66 aa). Positions 205–230 are hinge; that stretch reads KREAVQEERQRSRERAESEAECASSS. Residues 211 to 222 are compositionally biased toward basic and acidic residues; sequence EERQRSRERAES. The interval 211–232 is disordered; it reads EERQRSRERAESEAECASSSHE. The NR LBD domain maps to 231–459; sequence HEDMPVERIL…SFLMEMLETP (229 aa).

Belongs to the nuclear hormone receptor family. NR2 subfamily. In terms of assembly, homodimer. Heterodimer with a RAR molecule. Binds DNA preferentially as a RAR/RXR heterodimer. Interacts with RARA. Post-translationally, acetylated by EP300.

The protein resides in the nucleus. It localises to the cytoplasm. In terms of biological role, receptor for retinoic acid. Retinoic acid receptors bind as heterodimers to their target response elements in response to their ligands, all-trans or 9-cis retinoic acid, and regulate gene expression in various biological processes. The RAR/RXR heterodimers bind to the retinoic acid response elements (RARE) composed of tandem 5'-AGGTCA-3' sites known as DR1-DR5. The high affinity ligand for RXRs is 9-cis retinoic acid. The sequence is that of Retinoic acid receptor RXR-gamma (Rxrg) from Mus musculus (Mouse).